A 602-amino-acid polypeptide reads, in one-letter code: Transcription factor COE4 (602 aa).

Residues 64–67 are interaction with DNA; the sequence is RKSN. The C5-type zinc-finger motif lies at 152–171; sequence CRVLLTHEIMCSRCCDRKSC. Interaction with DNA stretches follow at residues 198 to 205 and 237 to 240; these read NCLKNAGN and NNSK. Residues 256-338 form the IPT/TIG domain; sequence PCIKAISPGE…CKGCPGRFVY (83 aa). Disordered stretches follow at residues 448 to 476 and 558 to 602; these read PEPG…SGYG and PVLR…LAYS. Residues 560–569 are compositionally biased toward pro residues; that stretch reads LRPPSSPPQA.

The protein belongs to the COE family. As to quaternary structure, forms either a homodimer or a heterodimer with a related family member. Interacts with MAPK3/ERK1. Interacts with STAT5A. Most highly expressed in cytotoxic NK cells, especially CD16(+) NK cells, followed by CD8(+) T-cells.

It is found in the nucleus. Functionally, transcription factor. Binds to specific sequence motif 5'-CCCNNG[GA]G-3' in regulatory elements of putative target immunoregulatory genes such as NKG7, GZMA, and TBX21. Positively modulates transcription of NKG7. May play a role in regulating FAS/CD95-mediated apoptosis in cytotoxic NK cells and T-cells, probably downstream of interleukin IL2 signaling. This is Transcription factor COE4 (EBF4) from Homo sapiens (Human).